The chain runs to 208 residues: Single-stranded DNA-binding protein DdrA (208 aa).

This sequence belongs to the RAD52 family. As to quaternary structure, homooligomer composed of 8 to 10 subunits; probably arranged in a ring-structure.

Its function is as follows. ssDNA-binding protein that contributes to the ionizing radiation resistance of D.radiodurans. Plays a role in DNA repair and genome reconstitution, in a RecA-independent process, since DdrA is essential for recovery from severe genomic fragmentation as a result of exposure to severe levels of ionizing radiation in an environment lacking nutrients. In vitro, binds to the 3'-ends of single-stranded DNA, protecting them from nuclease degradation. Thus, DdrA is part of a DNA end-protection system that helps to preserve genome integrity following irradiation or desiccation. Does not display DNA strand annealing activity, unlike eukaryotic Rad52 protein homologs. In Deinococcus radiodurans (strain ATCC 13939 / DSM 20539 / JCM 16871 / CCUG 27074 / LMG 4051 / NBRC 15346 / NCIMB 9279 / VKM B-1422 / R1), this protein is Single-stranded DNA-binding protein DdrA (ddrA).